The sequence spans 208 residues: MARYIGPSCKLARREGADLSLKSPSRALDSKCKLEQRPGQHGAVRKSKLSDYASQLREKQKVKRIYGVLERQFRNYYKNASTKKGNTGENLLQLLETRLDNVIYRMGFAVTRPAARQLVSHRSVLVNGKMVNLPSYHVKPGDVVALSQRAQKYLCVQESLTIKDQHGSAFSWIEVDSEKFSGVFKALPDRADLPSDINEALIVELYSK.

The S4 RNA-binding domain maps to 97-158 (TRLDNVIYRM…RAQKYLCVQE (62 aa)).

This sequence belongs to the universal ribosomal protein uS4 family. As to quaternary structure, part of the 30S ribosomal subunit. Contacts protein S5. The interaction surface between S4 and S5 is involved in control of translational fidelity.

In terms of biological role, one of the primary rRNA binding proteins, it binds directly to 16S rRNA where it nucleates assembly of the body of the 30S subunit. Its function is as follows. With S5 and S12 plays an important role in translational accuracy. The polypeptide is Small ribosomal subunit protein uS4 (Xylella fastidiosa (strain M23)).